We begin with the raw amino-acid sequence, 349 residues long: GDP-mannose:glycolipid 4-beta-D-mannosyltransferase (349 aa).

The signal sequence occupies residues 1–14 (MSASASLPVTRAAA).

Belongs to the glycosyltransferase 94 family.

It localises to the cell inner membrane. The catalysed reaction is beta-D-GlcA-(1-&gt;2)-alpha-D-Man-(1-&gt;3)-beta-D-Glc-(1-&gt;4)-alpha-D-Glc-di-trans,octa-cis-undecaprenyl diphosphate + GDP-alpha-D-mannose = beta-D-Man-(1-&gt;4)-beta-D-GlcA-(1-&gt;2)-alpha-D-Man-(1-&gt;3)-beta-D-Glc-(1-&gt;4)-alpha-D-Glc-di-trans,octa-cis-undecaprenyl diphosphate + GDP + H(+). The protein operates within glycan biosynthesis; xanthan biosynthesis. Its function is as follows. Nonprocessive beta-mannosyltransferase that catalyzes the transfer of a mannose residue from GDP-mannose to glucuronic acid-beta-1,2-mannose-alpha-1,3-glucose-beta-1,4-glucose-PP-polyisoprenyl to form the lipid-linked pentasaccharide repeating unit of xanthan, Man-GlcA-Man-Glc(2)-PP-Pol. Is involved in the biosynthesis of the exopolysaccharide xanthan. To a lesser extent, can also use ADP-Man and even GDP-Glc as sugar donor substrates in vitro. Is unable to transfer a Man residue to the free-tetrasaccharide GlcA-Man-Glc(2) used as an acceptor, which indicates that the diphosphate group and the lipid moiety in the acceptor substrate are of major importance for acceptor binding and catalysis. This is GDP-mannose:glycolipid 4-beta-D-mannosyltransferase (gumI) from Xanthomonas campestris pv. campestris.